The chain runs to 255 residues: Dehydrogenase/reductase SDR family member 11 (255 aa).

The first 23 residues, M1–A23, serve as a signal peptide directing secretion. NADP(+) is bound by residues G13 to I18, R38 to S39, E44, D65 to L66, and N92. The substrate site is built by S146 and Y161. Residues Y161, K165, V196–G199, and K203 each bind NADP(+). Y161 acts as the Proton acceptor in catalysis.

The protein belongs to the short-chain dehydrogenases/reductases (SDR) family.

It is found in the secreted. The enzyme catalyses a 3beta-hydroxysteroid + NADP(+) = a 3-oxosteroid + NADPH + H(+). The catalysed reaction is 17beta-estradiol + NAD(+) = estrone + NADH + H(+). It catalyses the reaction 17beta-estradiol + NADP(+) = estrone + NADPH + H(+). The protein operates within steroid biosynthesis; estrogen biosynthesis. Its activity is regulated as follows. Inhibited by flavonoids including apigenin, luteolin, genistein, kaempferol and quercetin and also by carbenoxolone, zearalenone, glycyrrhetinic, curcumin and flufenamic acid. In terms of biological role, catalyzes the conversion of the 17-keto group of estrone, 4- and 5-androstenes and 5-alpha-androstanes into their 17-beta-hydroxyl metabolites and the conversion of the 3-keto group of 3-, 3,17- and 3,20- diketosteroids into their 3-hydroxyl metabolites. Exhibits reductive 3-beta-hydroxysteroid dehydrogenase activity toward 5-beta-androstanes, 5-beta-pregnanes, 4-pregnenes and bile acids. May also reduce endogenous and exogenous alpha-dicarbonyl compounds and xenobiotic alicyclic ketones. The chain is Dehydrogenase/reductase SDR family member 11 (DHRS11) from Gallus gallus (Chicken).